A 270-amino-acid polypeptide reads, in one-letter code: MTWWEALLLGLIQGLTEFIPVSSSGHLVLGQYLLGLDKEAADVTFEVFVHFGTVLSILTVYWDDVAELVEEAWAGLRAPRAVPTRFAENDTFRLGVFILVTLVPTGVAYVLFREPLEQAFGSPRFTSAMLVGTGVLLLLTRIGPRPDGDLSGVKAFVVGVAQSCALVPGISRSGATICTALYQNVAPERAANFSFLMLLPVVLGGTVLKGLELMEQGVGAAGLSLGIGTVAAYGSGIGAIYVVLDVVRRGNLQYFAYYCFLIGGLGLWLL.

Helical transmembrane passes span 1–21 (MTWW…FIPV), 92–112 (FRLG…YVLF), 119–139 (AFGS…LLLL), 150–170 (LSGV…VPGI), 193–213 (FSFL…GLEL), 223–243 (LSLG…IYVV), and 250–270 (GNLQ…LWLL).

This sequence belongs to the UppP family.

It localises to the cell inner membrane. It catalyses the reaction di-trans,octa-cis-undecaprenyl diphosphate + H2O = di-trans,octa-cis-undecaprenyl phosphate + phosphate + H(+). Catalyzes the dephosphorylation of undecaprenyl diphosphate (UPP). Confers resistance to bacitracin. This is Undecaprenyl-diphosphatase from Salinibacter ruber (strain DSM 13855 / M31).